Consider the following 473-residue polypeptide: Knob-associated histidine-rich protein (473 aa).

The N-terminal stretch at 1–34 (MKSFKNKNTLRRKKAFPVFTKILLVSFLVWVLKC) is a signal peptide. N-linked (GlcNAc...) asparagine glycosylation is present at asparagine 42. Positions 57-87 (AQKQHEHHHHHHHQHQHQHQAPHQAHHHHHH) are enriched in basic residues. Disordered stretches follow at residues 57–143 (AQKQ…QVFR) and 347–473 (SSVN…DGSK). The span at 95–104 (PQVHQQVHGQ) shows a compositional bias: low complexity. A compositionally biased stretch (basic residues) spans 108 to 117 (HHHHHHHHHQ). Composition is skewed to basic and acidic residues over residues 354–375 (KHGD…EGEK) and 396–405 (KDNEDAESVK). A compositionally biased stretch (basic residues) spans 406-422 (SKKHKSHDCEKKKSKKH). Basic and acidic residues-rich tracts occupy residues 423 to 444 (KDNE…GEKH) and 453 to 473 (KTNE…DGSK).

It localises to the secreted. KAHRP might mimick human histidine-rich glycoproteins to anchor host thrombospondin or a parasite analog in a binding complex with the endothelial cell receptor. The protein is Knob-associated histidine-rich protein of Plasmodium falciparum.